Consider the following 584-residue polypeptide: DNA ligase (584 aa).

Glutamate 249 contributes to the ATP binding site. The active-site N6-AMP-lysine intermediate is lysine 251. Arginine 256, arginine 271, glutamate 301, phenylalanine 341, arginine 416, and lysine 422 together coordinate ATP.

The protein belongs to the ATP-dependent DNA ligase family. Mg(2+) serves as cofactor.

It catalyses the reaction ATP + (deoxyribonucleotide)n-3'-hydroxyl + 5'-phospho-(deoxyribonucleotide)m = (deoxyribonucleotide)n+m + AMP + diphosphate.. Functionally, DNA ligase that seals nicks in double-stranded DNA during DNA replication, DNA recombination and DNA repair. The protein is DNA ligase of Pyrobaculum arsenaticum (strain DSM 13514 / JCM 11321 / PZ6).